The primary structure comprises 439 residues: Ribosomal protein uS12 methylthiotransferase RimO (439 aa).

Residues 7-119 (KQLCLISLGC…IDIMIAKKQN (113 aa)) form the MTTase N-terminal domain. Positions 16, 50, 82, 151, 155, and 158 each coordinate [4Fe-4S] cluster. Positions 137-368 (TGSSVHAYVK…ALKHQNHSFK (232 aa)) constitute a Radical SAM core domain.

The protein belongs to the methylthiotransferase family. RimO subfamily. [4Fe-4S] cluster is required as a cofactor.

It is found in the cytoplasm. It carries out the reaction L-aspartate(89)-[ribosomal protein uS12]-hydrogen + (sulfur carrier)-SH + AH2 + 2 S-adenosyl-L-methionine = 3-methylsulfanyl-L-aspartate(89)-[ribosomal protein uS12]-hydrogen + (sulfur carrier)-H + 5'-deoxyadenosine + L-methionine + A + S-adenosyl-L-homocysteine + 2 H(+). Functionally, catalyzes the methylthiolation of an aspartic acid residue of ribosomal protein uS12. This is Ribosomal protein uS12 methylthiotransferase RimO from Helicobacter pylori (strain P12).